The following is an 880-amino-acid chain: Alanine--tRNA ligase (880 aa).

Positions 566, 570, 668, and 672 each coordinate Zn(2+).

This sequence belongs to the class-II aminoacyl-tRNA synthetase family. It depends on Zn(2+) as a cofactor.

It localises to the cytoplasm. The catalysed reaction is tRNA(Ala) + L-alanine + ATP = L-alanyl-tRNA(Ala) + AMP + diphosphate. Functionally, catalyzes the attachment of alanine to tRNA(Ala) in a two-step reaction: alanine is first activated by ATP to form Ala-AMP and then transferred to the acceptor end of tRNA(Ala). Also edits incorrectly charged Ser-tRNA(Ala) and Gly-tRNA(Ala) via its editing domain. The protein is Alanine--tRNA ligase of Nostoc punctiforme (strain ATCC 29133 / PCC 73102).